We begin with the raw amino-acid sequence, 173 residues long: Large ribosomal subunit protein uL16 (173 aa).

This sequence belongs to the universal ribosomal protein uL16 family.

The chain is Large ribosomal subunit protein uL16 from Methanococcus aeolicus (strain ATCC BAA-1280 / DSM 17508 / OCM 812 / Nankai-3).